The sequence spans 340 residues: 3-isopropylmalate dehydrogenase (340 aa).

Residues Arg-88, Arg-98, Arg-122, and Asp-212 each contribute to the substrate site. Mg(2+) contacts are provided by Asp-212, Asp-236, and Asp-240. NAD(+) is bound at residue 272 to 284; that stretch reads GSAPDIMGKGIAD.

This sequence belongs to the isocitrate and isopropylmalate dehydrogenases family. LeuB type 2 subfamily. In terms of assembly, homodimer. The cofactor is Mg(2+). Mn(2+) serves as cofactor.

The protein localises to the cytoplasm. The enzyme catalyses (2R,3S)-3-isopropylmalate + NAD(+) = 4-methyl-2-oxopentanoate + CO2 + NADH. It functions in the pathway amino-acid biosynthesis; L-leucine biosynthesis; L-leucine from 3-methyl-2-oxobutanoate: step 3/4. In terms of biological role, catalyzes the oxidation of 3-carboxy-2-hydroxy-4-methylpentanoate (3-isopropylmalate) to 3-carboxy-4-methyl-2-oxopentanoate. The product decarboxylates to 4-methyl-2 oxopentanoate. The polypeptide is 3-isopropylmalate dehydrogenase (Corynebacterium efficiens (strain DSM 44549 / YS-314 / AJ 12310 / JCM 11189 / NBRC 100395)).